Here is a 267-residue protein sequence, read N- to C-terminus: WUSCHEL-related homeobox 8 (267 aa).

Positions 88-152 form a DNA-binding region, homeobox; WUS-type; that stretch reads TARQRWTPTP…NRRARSKRKQ (65 aa). The disordered stretch occupies residues 148-195; the sequence is SKRKQAALPNNNAESEAEADEESPTDKKPKSDRPLHQNIAMRDHNSER. The segment covering 171 to 195 has biased composition (basic and acidic residues); that stretch reads PTDKKPKSDRPLHQNIAMRDHNSER.

Belongs to the WUS homeobox family.

The protein resides in the nucleus. Its function is as follows. Transcription factor which may be involved in developmental processes. The polypeptide is WUSCHEL-related homeobox 8 (WOX8) (Oryza sativa subsp. japonica (Rice)).